Here is a 549-residue protein sequence, read N- to C-terminus: Lysine-specific demethylase JMJ31 (549 aa).

Residues 125–296 (DYRPGQIYLA…SNMPEHMDSY (172 aa)) form the JmjC domain. Positions 184, 186, and 266 each coordinate Fe cation.

The protein belongs to the JARID1 histone demethylase family. Fe(2+) serves as cofactor. Mostly expressed in leaves and inflorescences, and, to a lower extent, in roots, siliques and stems.

It is found in the nucleus. May function as histone H3 lysine demethylase and be involved in regulation of gene expression. This chain is Lysine-specific demethylase JMJ31, found in Arabidopsis thaliana (Mouse-ear cress).